The primary structure comprises 246 residues: Carboxy-S-adenosyl-L-methionine synthase (246 aa).

Residues Tyr-43, 68 to 70 (GCS), 93 to 94 (DN), 121 to 122 (DI), Asn-136, and Arg-203 each bind S-adenosyl-L-methionine.

This sequence belongs to the class I-like SAM-binding methyltransferase superfamily. Cx-SAM synthase family. Homodimer.

The enzyme catalyses prephenate + S-adenosyl-L-methionine = carboxy-S-adenosyl-L-methionine + 3-phenylpyruvate + H2O. Its function is as follows. Catalyzes the conversion of S-adenosyl-L-methionine (SAM) to carboxy-S-adenosyl-L-methionine (Cx-SAM). The protein is Carboxy-S-adenosyl-L-methionine synthase of Vibrio cholerae serotype O1 (strain ATCC 39541 / Classical Ogawa 395 / O395).